Here is a 571-residue protein sequence, read N- to C-terminus: Potassium-transporting ATPase potassium-binding subunit (571 aa).

The next 12 helical transmembrane spans lie at 5–25, 60–80, 86–106, 131–151, 177–197, 247–267, 291–311, 334–354, 386–406, 425–445, 498–518, and 547–567; these read LAAG…YVPV, YGYA…LYAL, VLPL…NTAV, GLAV…VALI, ILLP…VIQS, PTPV…VSLT, LTLL…TLAA, FGIP…TGAV, GLYG…LLVG, ALSV…TVIL, ALGL…LALA, and GTVV…GPIA.

Belongs to the KdpA family. In terms of assembly, the system is composed of three essential subunits: KdpA, KdpB and KdpC.

The protein localises to the cell membrane. Part of the high-affinity ATP-driven potassium transport (or Kdp) system, which catalyzes the hydrolysis of ATP coupled with the electrogenic transport of potassium into the cytoplasm. This subunit binds the extracellular potassium ions and delivers the ions to the membrane domain of KdpB through an intramembrane tunnel. The chain is Potassium-transporting ATPase potassium-binding subunit from Rhodococcus jostii (strain RHA1).